The sequence spans 368 residues: Probable endopolygalacturonase A (368 aa).

The signal sequence occupies residues 1–18 (MRSVKLFGLAALGSLGAA). Positions 19 to 31 (APAPSRVSDLTKR) are excised as a propeptide. An intrachain disulfide couples Cys-35 to Cys-50. 7 PbH1 repeats span residues 140–162 (LEDS…SVQA), 167–192 (LIDI…DISE), 193–214 (STGV…AINS), 215–235 (GENI…SIGS), 244–265 (VKNV…RIKT), 273–295 (VSQV…VIEQ), and 307–352 (TTGV…DITG). Residue Asp-207 is the Proton donor of the active site. Residues Cys-209 and Cys-225 are joined by a disulfide bond. The active site involves His-229. Asn-246 carries an N-linked (GlcNAc...) asparagine glycan. 2 disulfides stabilise this stretch: Cys-335/Cys-340 and Cys-359/Cys-368.

This sequence belongs to the glycosyl hydrolase 28 family.

Its subcellular location is the secreted. It carries out the reaction (1,4-alpha-D-galacturonosyl)n+m + H2O = (1,4-alpha-D-galacturonosyl)n + (1,4-alpha-D-galacturonosyl)m.. Functionally, involved in maceration and soft-rotting of plant tissue. Hydrolyzes the 1,4-alpha glycosidic bonds of de-esterified pectate in the smooth region of the plant cell wall. This is Probable endopolygalacturonase A (pgaA) from Aspergillus fumigatus (strain CBS 144.89 / FGSC A1163 / CEA10) (Neosartorya fumigata).